A 143-amino-acid chain; its full sequence is Large ribosomal subunit protein uL11 (143 aa).

The protein belongs to the universal ribosomal protein uL11 family. As to quaternary structure, part of the ribosomal stalk of the 50S ribosomal subunit. Interacts with L10 and the large rRNA to form the base of the stalk. L10 forms an elongated spine to which L12 dimers bind in a sequential fashion forming a multimeric L10(L12)X complex. Post-translationally, one or more lysine residues are methylated.

Its function is as follows. Forms part of the ribosomal stalk which helps the ribosome interact with GTP-bound translation factors. This Thiobacillus denitrificans (strain ATCC 25259 / T1) protein is Large ribosomal subunit protein uL11.